A 41-amino-acid chain; its full sequence is Large ribosomal subunit protein bL36 (41 aa).

This sequence belongs to the bacterial ribosomal protein bL36 family.

This Jannaschia sp. (strain CCS1) protein is Large ribosomal subunit protein bL36.